The sequence spans 192 residues: Fe/S biogenesis protein NfuA (192 aa).

Residues Cys-149 and Cys-152 each contribute to the [4Fe-4S] cluster site.

Belongs to the NfuA family. In terms of assembly, homodimer. It depends on [4Fe-4S] cluster as a cofactor.

Involved in iron-sulfur cluster biogenesis. Binds a 4Fe-4S cluster, can transfer this cluster to apoproteins, and thereby intervenes in the maturation of Fe/S proteins. Could also act as a scaffold/chaperone for damaged Fe/S proteins. This Shewanella putrefaciens (strain CN-32 / ATCC BAA-453) protein is Fe/S biogenesis protein NfuA.